A 242-amino-acid chain; its full sequence is Basic agglutinin (242 aa).

N45 and N220 each carry an N-linked (GlcNAc...) asparagine glycan.

This sequence belongs to the leguminous lectin family.

Its function is as follows. Lectin. In Psophocarpus tetragonolobus (Winged bean), this protein is Basic agglutinin (WBAI).